The primary structure comprises 56 residues: Small ribosomal subunit protein uS14 (56 aa).

This sequence belongs to the universal ribosomal protein uS14 family. In terms of assembly, component of the small ribosomal subunit (SSU). Mature yeast ribosomes consist of a small (40S) and a large (60S) subunit. The 40S small subunit contains 1 molecule of ribosomal RNA (18S rRNA) and at least 33 different proteins. The large 60S subunit contains 3 rRNA molecules (25S, 5.8S and 5S rRNA) and at least 46 different proteins.

The protein resides in the cytoplasm. The protein localises to the nucleus. Functionally, component of the ribosome, a large ribonucleoprotein complex responsible for the synthesis of proteins in the cell. The small ribosomal subunit (SSU) binds messenger RNAs (mRNAs) and translates the encoded message by selecting cognate aminoacyl-transfer RNA (tRNA) molecules. The large subunit (LSU) contains the ribosomal catalytic site termed the peptidyl transferase center (PTC), which catalyzes the formation of peptide bonds, thereby polymerizing the amino acids delivered by tRNAs into a polypeptide chain. The nascent polypeptides leave the ribosome through a tunnel in the LSU and interact with protein factors that function in enzymatic processing, targeting, and the membrane insertion of nascent chains at the exit of the ribosomal tunnel. The chain is Small ribosomal subunit protein uS14 (rps29) from Schizosaccharomyces pombe (strain 972 / ATCC 24843) (Fission yeast).